We begin with the raw amino-acid sequence, 1744 residues long: Tensin-1 (1744 aa).

The disordered stretch occupies residues 15 to 55 (SPAVNYELPSPGQSITKQVDTPDATRSPRGGQAHRKASRSM). A Phosphatase tensin-type domain is found at 58–230 (TAAMESSCEL…HYFSGLLSGS (173 aa)). The 127-residue stretch at 235–361 (NKPLFLHHVI…GKVEFVFSYG (127 aa)) folds into the C2 tensin-type domain. Disordered regions lie at residues 467–505 (TLSV…SPEE), 569–589 (DELP…SSLD), 666–686 (AQEH…PAWL), 724–797 (PQAP…APSR), 934–956 (GSQQ…QLPH), 982–1077 (RVAG…PGLA), and 1156–1437 (VPSP…GSAV). Residues 468-481 (LSVSSDSGNSTAST) are compositionally biased toward polar residues. The segment covering 580-589 (GSLGTLSSLD) has biased composition (low complexity). Residues 728–753 (ARSTSSREAVQRGLNSWQQQGGSRPP) are compositionally biased toward polar residues. A compositionally biased stretch (low complexity) spans 763–773 (SHSPSLSSCSP). Residues 774-783 (QPSPLQPMPP) are compositionally biased toward pro residues. Composition is skewed to basic and acidic residues over residues 1004–1014 (TPSDSHYEKSS) and 1041–1054 (RPKE…KEAF). Residues 1060-1069 (ASPSSLTSGG) show a composition bias toward polar residues. 2 stretches are compositionally biased toward low complexity: residues 1156 to 1169 (VPSP…IHSV) and 1208 to 1220 (SAHS…SPSS). 3 stretches are compositionally biased toward polar residues: residues 1344–1355 (LSRQSSASGYQP), 1370–1380 (GTSTPHSSSPD), and 1405–1420 (ERSN…NGKA). A compositionally biased stretch (low complexity) spans 1421–1435 (SSPLSSGMSSPSSGS). The SH2 domain maps to 1472–1581 (WYKPDISREQ…ALPCKLVIPD (110 aa)). Residues 1607–1743 (ACNVLFINSV…SRVMLGSGQK (137 aa)) enclose the PTB domain.

The protein belongs to the PTEN phosphatase protein family. Binds to actin filaments. Interacts with phosphotyrosine-containing proteins. Tyrosine phosphorylated. In terms of tissue distribution, heart, gizzard, lung and skeletal muscle.

It localises to the cell surface. The protein localises to the cell junction. It is found in the focal adhesion. Its subcellular location is the cytoplasm. The protein resides in the cytoskeleton. In terms of biological role, may act as a protein phosphatase and/or a lipid phosphatase. Involved in fibrillar adhesion formation. Plays a role in cell polarization and migration. May be involved in cartilage development and in linking signal transduction pathways to the cytoskeleton. This chain is Tensin-1 (TNS1), found in Gallus gallus (Chicken).